The sequence spans 569 residues: Mitogen-activated protein kinase 7 (569 aa).

Positions 13–304 (YKIQEIVGKG…AEEALADPYF (292 aa)) constitute a Protein kinase domain. Residues 19–27 (VGKGSYGVV) and lysine 42 contribute to the ATP site. The active-site Proton acceptor is aspartate 139. A Phosphothreonine modification is found at threonine 175. The TXY motif lies at 175–177 (TDY). The residue at position 177 (tyrosine 177) is a Phosphotyrosine. The tract at residues 401 to 420 (TTVHSTSIPPNEGLDATSQV) is disordered.

The protein belongs to the protein kinase superfamily. CMGC Ser/Thr protein kinase family. MAP kinase subfamily. Post-translationally, dually phosphorylated on Thr-175 and Tyr-177, which activates the enzyme.

The catalysed reaction is L-seryl-[protein] + ATP = O-phospho-L-seryl-[protein] + ADP + H(+). It carries out the reaction L-threonyl-[protein] + ATP = O-phospho-L-threonyl-[protein] + ADP + H(+). With respect to regulation, activated by threonine and tyrosine phosphorylation. This Oryza sativa subsp. japonica (Rice) protein is Mitogen-activated protein kinase 7 (MPK7).